The following is a 343-amino-acid chain: 4-hydroxyproline 2-epimerase 1 (343 aa).

Ser-90 serves as the catalytic Proton acceptor. Substrate is bound by residues 91 to 92, Asp-251, and 256 to 257; these read GS and GT.

This sequence belongs to the proline racemase family.

The catalysed reaction is trans-4-hydroxy-L-proline = cis-4-hydroxy-D-proline. Functionally, catalyzes the epimerization of trans-4-hydroxy-L-proline (t4LHyp) to cis-4-hydroxy-D-proline (c4DHyp) in vitro, albeit with low efficiency. The physiological substrate may be different. Displays no proline racemase activity. This chain is 4-hydroxyproline 2-epimerase 1, found in Brucella anthropi (strain ATCC 49188 / DSM 6882 / CCUG 24695 / JCM 21032 / LMG 3331 / NBRC 15819 / NCTC 12168 / Alc 37) (Ochrobactrum anthropi).